Reading from the N-terminus, the 85-residue chain is UPF0386 protein Atu1321 (85 aa).

Belongs to the UPF0386 family.

The sequence is that of UPF0386 protein Atu1321 from Agrobacterium fabrum (strain C58 / ATCC 33970) (Agrobacterium tumefaciens (strain C58)).